A 320-amino-acid polypeptide reads, in one-letter code: Cyclin-D6-1 (320 aa).

A disordered region spans residues 279-320; it reads HHRSASSESERTTTVGSAANSADAKRRCMGPPRQWGVGGPDE.

This sequence belongs to the cyclin family. Cyclin D subfamily.

In Oryza sativa subsp. japonica (Rice), this protein is Cyclin-D6-1 (CYCD6-1).